We begin with the raw amino-acid sequence, 473 residues long: Photosystem II CP43 reaction center protein (473 aa).

Residues methionine 1 to glutamate 14 constitute a propeptide that is removed on maturation. Threonine 15 is subject to N-acetylthreonine. Threonine 15 carries the phosphothreonine modification. 5 helical membrane passes run leucine 69–alanine 93, leucine 134–asparagine 155, lysine 178–threonine 200, lysine 255–serine 275, and tryptophan 291–alanine 312. Glutamate 367 is a binding site for [CaMn4O5] cluster. A helical membrane pass occupies residues arginine 447–proline 471.

The protein belongs to the PsbB/PsbC family. PsbC subfamily. PSII is composed of 1 copy each of membrane proteins PsbA, PsbB, PsbC, PsbD, PsbE, PsbF, PsbH, PsbI, PsbJ, PsbK, PsbL, PsbM, PsbT, PsbX, PsbY, PsbZ, Psb30/Ycf12, at least 3 peripheral proteins of the oxygen-evolving complex and a large number of cofactors. It forms dimeric complexes. Binds multiple chlorophylls and provides some of the ligands for the Ca-4Mn-5O cluster of the oxygen-evolving complex. It may also provide a ligand for a Cl- that is required for oxygen evolution. PSII binds additional chlorophylls, carotenoids and specific lipids. is required as a cofactor.

The protein localises to the plastid. The protein resides in the chloroplast thylakoid membrane. Its function is as follows. One of the components of the core complex of photosystem II (PSII). It binds chlorophyll and helps catalyze the primary light-induced photochemical processes of PSII. PSII is a light-driven water:plastoquinone oxidoreductase, using light energy to abstract electrons from H(2)O, generating O(2) and a proton gradient subsequently used for ATP formation. This Vitis vinifera (Grape) protein is Photosystem II CP43 reaction center protein.